A 154-amino-acid chain; its full sequence is Transcriptional regulator MraZ (154 aa).

SpoVT-AbrB domains follow at residues 6–53 (NSEA…PENV) and 83–126 (VEVI…SKEI).

This sequence belongs to the MraZ family. Forms oligomers.

It is found in the cytoplasm. Its subcellular location is the nucleoid. This Phocaeicola vulgatus (strain ATCC 8482 / DSM 1447 / JCM 5826 / CCUG 4940 / NBRC 14291 / NCTC 11154) (Bacteroides vulgatus) protein is Transcriptional regulator MraZ.